Reading from the N-terminus, the 146-residue chain is Single-stranded DNA-binding protein 1-A, mitochondrial (146 aa).

A mitochondrion-targeting transit peptide spans Met1–Gln17. The region spanning Ile28–Ser140 is the SSB domain.

In terms of assembly, homotetramer.

The protein localises to the mitochondrion. The protein resides in the mitochondrion matrix. It is found in the mitochondrion nucleoid. Its function is as follows. Binds preferentially and cooperatively to pyrimidine rich single-stranded DNA (ss-DNA). Required to maintain the copy number of mitochondrial DNA (mtDNA) and plays crucial roles during mtDNA replication that stimulate activity of the DNA polymerase at the replication fork. May also function in mtDNA repair. The sequence is that of Single-stranded DNA-binding protein 1-A, mitochondrial (ssbp1-a) from Xenopus laevis (African clawed frog).